Here is a 69-residue protein sequence, read N- to C-terminus: MKAIISLLLISAMVFSMIEAVPVXXGLQLFESERGCLPHNRFCNALSGPRCCSRLKCKELSIWDSRCLG.

An N-terminal signal peptide occupies residues 1–20 (MKAIISLLLISAMVFSMIEA). Residues 21-34 (VPVXXGLQLFESER) constitute a propeptide that is removed on maturation. 3 disulfides stabilise this stretch: C36–C52, C43–C57, and C51–C67. L68 is modified (leucine amide).

It belongs to the neurotoxin 01 (U2-agtx) family. In terms of tissue distribution, expressed by the venom gland.

Its subcellular location is the secreted. Functionally, insect active toxin causing rapid but reversible paralysis in crickets. No activity shown in mammals. Does not show effect on mammalian voltage-gated calcium channels. The polypeptide is U2-agatoxin-Ao1i (Agelena orientalis (Funnel-web spider)).